Reading from the N-terminus, the 393-residue chain is Acetylornithine aminotransferase 1 (393 aa).

Arg-131 contributes to the N(2)-acetyl-L-ornithine binding site. Pyridoxal 5'-phosphate is bound at residue 215–218 (DEVQ). The residue at position 244 (Lys-244) is an N6-(pyridoxal phosphate)lysine. Thr-272 is a N(2)-acetyl-L-ornithine binding site. Residue Thr-273 participates in pyridoxal 5'-phosphate binding.

The protein belongs to the class-III pyridoxal-phosphate-dependent aminotransferase family. ArgD subfamily. Homodimer. Pyridoxal 5'-phosphate is required as a cofactor.

The protein resides in the cytoplasm. It carries out the reaction N(2)-acetyl-L-ornithine + 2-oxoglutarate = N-acetyl-L-glutamate 5-semialdehyde + L-glutamate. It functions in the pathway amino-acid biosynthesis; L-arginine biosynthesis; N(2)-acetyl-L-ornithine from L-glutamate: step 4/4. The chain is Acetylornithine aminotransferase 1 from Bordetella bronchiseptica (strain ATCC BAA-588 / NCTC 13252 / RB50) (Alcaligenes bronchisepticus).